The primary structure comprises 188 residues: Tuftelin (188 aa).

Residues 1-181 are a coiled coil; that stretch reads SLRKTVQDLL…DRMEHLIEKQ (181 aa).

Belongs to the tuftelin family. Interacts with TFIP11.

It is found in the secreted. Its function is as follows. Involved in the structural organization of the epidermis. Involved in the mineralization and structural organization of enamel. This is Tuftelin (TUFT1) from Sus scrofa (Pig).